Reading from the N-terminus, the 251-residue chain is Coproheme decarboxylase (251 aa).

Fe-coproporphyrin III-binding positions include arginine 133, 147–151, histidine 174, glutamine 187, and serine 225; that span reads YPMSK. Tyrosine 147 is an active-site residue.

It belongs to the ChdC family. Type 1 subfamily. Requires Fe-coproporphyrin III as cofactor.

The catalysed reaction is Fe-coproporphyrin III + 2 H2O2 + 2 H(+) = heme b + 2 CO2 + 4 H2O. It carries out the reaction Fe-coproporphyrin III + H2O2 + H(+) = harderoheme III + CO2 + 2 H2O. It catalyses the reaction harderoheme III + H2O2 + H(+) = heme b + CO2 + 2 H2O. It participates in porphyrin-containing compound metabolism; protoheme biosynthesis. Functionally, involved in coproporphyrin-dependent heme b biosynthesis. Catalyzes the decarboxylation of Fe-coproporphyrin III (coproheme) to heme b (protoheme IX), the last step of the pathway. The reaction occurs in a stepwise manner with a three-propionate intermediate. The protein is Coproheme decarboxylase of Listeria monocytogenes serotype 4b (strain CLIP80459).